The primary structure comprises 376 residues: Uroporphyrinogen decarboxylase (376 aa).

Substrate contacts are provided by residues 29–33 (RQAGR), Asp79, Tyr155, Ser210, and His342.

This sequence belongs to the uroporphyrinogen decarboxylase family. Homodimer.

It localises to the cytoplasm. It catalyses the reaction uroporphyrinogen III + 4 H(+) = coproporphyrinogen III + 4 CO2. The protein operates within porphyrin-containing compound metabolism; protoporphyrin-IX biosynthesis; coproporphyrinogen-III from 5-aminolevulinate: step 4/4. Functionally, catalyzes the decarboxylation of four acetate groups of uroporphyrinogen-III to yield coproporphyrinogen-III. This chain is Uroporphyrinogen decarboxylase, found in Paracidovorax citrulli (strain AAC00-1) (Acidovorax citrulli).